The chain runs to 180 residues: Cytidylate kinase (180 aa).

Gly-7–Thr-15 is a binding site for ATP.

It belongs to the cytidylate kinase family. Type 2 subfamily.

The protein resides in the cytoplasm. The catalysed reaction is CMP + ATP = CDP + ADP. It catalyses the reaction dCMP + ATP = dCDP + ADP. This chain is Cytidylate kinase, found in Methanosarcina acetivorans (strain ATCC 35395 / DSM 2834 / JCM 12185 / C2A).